Here is a 316-residue protein sequence, read N- to C-terminus: 4-hydroxy-3-methylbut-2-enyl diphosphate reductase (316 aa).

C12 is a [4Fe-4S] cluster binding site. H41 and H74 together coordinate (2E)-4-hydroxy-3-methylbut-2-enyl diphosphate. Dimethylallyl diphosphate contacts are provided by H41 and H74. Isopentenyl diphosphate is bound by residues H41 and H74. Residue C96 coordinates [4Fe-4S] cluster. Position 124 (H124) interacts with (2E)-4-hydroxy-3-methylbut-2-enyl diphosphate. A dimethylallyl diphosphate-binding site is contributed by H124. H124 contacts isopentenyl diphosphate. E126 functions as the Proton donor in the catalytic mechanism. Residue T167 coordinates (2E)-4-hydroxy-3-methylbut-2-enyl diphosphate. C197 is a [4Fe-4S] cluster binding site. Residues S225, S226, N227, and S269 each contribute to the (2E)-4-hydroxy-3-methylbut-2-enyl diphosphate site. Positions 225, 226, 227, and 269 each coordinate dimethylallyl diphosphate. Residues S225, S226, N227, and S269 each coordinate isopentenyl diphosphate.

This sequence belongs to the IspH family. In terms of assembly, homodimer. The cofactor is [4Fe-4S] cluster.

It carries out the reaction isopentenyl diphosphate + 2 oxidized [2Fe-2S]-[ferredoxin] + H2O = (2E)-4-hydroxy-3-methylbut-2-enyl diphosphate + 2 reduced [2Fe-2S]-[ferredoxin] + 2 H(+). The enzyme catalyses dimethylallyl diphosphate + 2 oxidized [2Fe-2S]-[ferredoxin] + H2O = (2E)-4-hydroxy-3-methylbut-2-enyl diphosphate + 2 reduced [2Fe-2S]-[ferredoxin] + 2 H(+). The protein operates within isoprenoid biosynthesis; dimethylallyl diphosphate biosynthesis; dimethylallyl diphosphate from (2E)-4-hydroxy-3-methylbutenyl diphosphate: step 1/1. It participates in isoprenoid biosynthesis; isopentenyl diphosphate biosynthesis via DXP pathway; isopentenyl diphosphate from 1-deoxy-D-xylulose 5-phosphate: step 6/6. Functionally, catalyzes the conversion of 1-hydroxy-2-methyl-2-(E)-butenyl 4-diphosphate (HMBPP) into a mixture of isopentenyl diphosphate (IPP) and dimethylallyl diphosphate (DMAPP). Acts in the terminal step of the DOXP/MEP pathway for isoprenoid precursor biosynthesis. The polypeptide is 4-hydroxy-3-methylbut-2-enyl diphosphate reductase (Sodalis glossinidius (strain morsitans)).